Here is a 310-residue protein sequence, read N- to C-terminus: Protoheme IX farnesyltransferase (310 aa).

A run of 9 helical transmembrane segments spans residues 26–45, 49–71, 95–115, 118–138, 147–167, 174–194, 220–240, 243–263, and 289–309; these read VMSL…PVTV, IALT…NMWW, GEAL…LGLA, LFAA…YSMW, IVIG…VATG, LFMF…LALF, VLVY…TGIG, LYLA…VRIW, and LFLH…GLGG.

Belongs to the UbiA prenyltransferase family. Protoheme IX farnesyltransferase subfamily. Interacts with CtaA.

Its subcellular location is the cell inner membrane. It catalyses the reaction heme b + (2E,6E)-farnesyl diphosphate + H2O = Fe(II)-heme o + diphosphate. The protein operates within porphyrin-containing compound metabolism; heme O biosynthesis; heme O from protoheme: step 1/1. Functionally, converts heme B (protoheme IX) to heme O by substitution of the vinyl group on carbon 2 of heme B porphyrin ring with a hydroxyethyl farnesyl side group. In Cereibacter sphaeroides (strain ATCC 17029 / ATH 2.4.9) (Rhodobacter sphaeroides), this protein is Protoheme IX farnesyltransferase.